Here is a 408-residue protein sequence, read N- to C-terminus: Argininosuccinate synthase (408 aa).

ATP is bound by residues 10-18 (AYSGGLDTS) and A37. L-citrulline is bound by residues Y90 and S95. An ATP-binding site is contributed by G120. Residues T122, N126, and D127 each coordinate L-aspartate. N126 is an L-citrulline binding site. Residues R130, S182, S191, E267, and Y279 each coordinate L-citrulline.

The protein belongs to the argininosuccinate synthase family. Type 1 subfamily. As to quaternary structure, homotetramer.

The protein resides in the cytoplasm. It carries out the reaction L-citrulline + L-aspartate + ATP = 2-(N(omega)-L-arginino)succinate + AMP + diphosphate + H(+). The protein operates within amino-acid biosynthesis; L-arginine biosynthesis; L-arginine from L-ornithine and carbamoyl phosphate: step 2/3. The protein is Argininosuccinate synthase of Paraburkholderia xenovorans (strain LB400).